We begin with the raw amino-acid sequence, 355 residues long: D-alanine--D-alanine ligase (355 aa).

Residues 143-350 (KTIFSNLKIP…IEQLVAKLVD (208 aa)) enclose the ATP-grasp domain. 178 to 233 (IKKLNFPVFVKPSNSGSSLGISKVINKSALLKALEKAWEIDARILVEEGLETREIE) provides a ligand contact to ATP. Residues Asp303, Glu317, and Asn319 each contribute to the Mg(2+) site.

The protein belongs to the D-alanine--D-alanine ligase family. The cofactor is Mg(2+). Mn(2+) is required as a cofactor.

The protein resides in the cytoplasm. The enzyme catalyses 2 D-alanine + ATP = D-alanyl-D-alanine + ADP + phosphate + H(+). It functions in the pathway cell wall biogenesis; peptidoglycan biosynthesis. Cell wall formation. This Prochlorococcus marinus (strain MIT 9312) protein is D-alanine--D-alanine ligase.